A 240-amino-acid polypeptide reads, in one-letter code: Uridylate kinase (240 aa).

Lys13–Gly16 provides a ligand contact to ATP. Gly55 is a binding site for UMP. Gly56 and Arg60 together coordinate ATP. UMP-binding positions include Asp75 and Thr136–Thr143. ATP is bound by residues Thr163, Gln164, Tyr169, and Asp172.

Belongs to the UMP kinase family. Homohexamer.

Its subcellular location is the cytoplasm. It catalyses the reaction UMP + ATP = UDP + ADP. Its pathway is pyrimidine metabolism; CTP biosynthesis via de novo pathway; UDP from UMP (UMPK route): step 1/1. Its activity is regulated as follows. Inhibited by UTP. Functionally, catalyzes the reversible phosphorylation of UMP to UDP. In Paramagnetospirillum magneticum (strain ATCC 700264 / AMB-1) (Magnetospirillum magneticum), this protein is Uridylate kinase.